The sequence spans 932 residues: Isoleucine--tRNA ligase (932 aa).

The short motif at 57-67 is the 'HIGH' region element; that stretch reads PYANGDIHIGT. An L-isoleucyl-5'-AMP-binding site is contributed by Glu559. The 'KMSKS' region motif lies at 600-604; the sequence is KMSKS. Lys603 is an ATP binding site. Zn(2+) contacts are provided by Cys899, Cys902, Cys919, and Cys922.

The protein belongs to the class-I aminoacyl-tRNA synthetase family. IleS type 1 subfamily. As to quaternary structure, monomer. Requires Zn(2+) as cofactor.

The protein resides in the cytoplasm. The enzyme catalyses tRNA(Ile) + L-isoleucine + ATP = L-isoleucyl-tRNA(Ile) + AMP + diphosphate. Catalyzes the attachment of isoleucine to tRNA(Ile). As IleRS can inadvertently accommodate and process structurally similar amino acids such as valine, to avoid such errors it has two additional distinct tRNA(Ile)-dependent editing activities. One activity is designated as 'pretransfer' editing and involves the hydrolysis of activated Val-AMP. The other activity is designated 'posttransfer' editing and involves deacylation of mischarged Val-tRNA(Ile). The polypeptide is Isoleucine--tRNA ligase (Thermoanaerobacter pseudethanolicus (strain ATCC 33223 / 39E) (Clostridium thermohydrosulfuricum)).